A 118-amino-acid polypeptide reads, in one-letter code: NADH-quinone oxidoreductase subunit A (118 aa).

3 helical membrane-spanning segments follow: residues 8-28, 64-84, and 87-107; these read IGIFLVAAISFPLIPLVLAFF, ALAFVIFDIEVIFLYPWAVAF, and VGLYGLIAATIFLLMLFAGLL.

It belongs to the complex I subunit 3 family. In terms of assembly, NDH-1 is composed of 14 different subunits. Subunits NuoA, H, J, K, L, M, N constitute the membrane sector of the complex.

It localises to the cell membrane. It catalyses the reaction a quinone + NADH + 5 H(+)(in) = a quinol + NAD(+) + 4 H(+)(out). Functionally, NDH-1 shuttles electrons from NADH, via FMN and iron-sulfur (Fe-S) centers, to quinones in the respiratory chain. The immediate electron acceptor for the enzyme in this species is believed to be ubiquinone. Couples the redox reaction to proton translocation (for every two electrons transferred, four hydrogen ions are translocated across the cytoplasmic membrane), and thus conserves the redox energy in a proton gradient. This is NADH-quinone oxidoreductase subunit A from Chloroflexus aurantiacus (strain ATCC 29366 / DSM 635 / J-10-fl).